We begin with the raw amino-acid sequence, 61 residues long: Probable tautomerase spyM18_1099 (61 aa).

P2 functions as the Proton acceptor; via imino nitrogen in the catalytic mechanism.

It belongs to the 4-oxalocrotonate tautomerase family.

The chain is Probable tautomerase spyM18_1099 from Streptococcus pyogenes serotype M18 (strain MGAS8232).